The primary structure comprises 333 residues: Fructose-1,6-bisphosphatase class 1 (333 aa).

The Mg(2+) site is built by E90, D112, L114, and D115. Substrate-binding positions include 115–118, N207, and K273; that span reads DGSS. Residue E279 participates in Mg(2+) binding.

This sequence belongs to the FBPase class 1 family. In terms of assembly, homotetramer. The cofactor is Mg(2+).

The protein resides in the cytoplasm. It catalyses the reaction beta-D-fructose 1,6-bisphosphate + H2O = beta-D-fructose 6-phosphate + phosphate. The protein operates within carbohydrate biosynthesis; gluconeogenesis. The protein is Fructose-1,6-bisphosphatase class 1 of Aromatoleum aromaticum (strain DSM 19018 / LMG 30748 / EbN1) (Azoarcus sp. (strain EbN1)).